The sequence spans 131 residues: Peptide methionine sulfoxide reductase MsrB (131 aa).

Residues 9–131 enclose the MsrB domain; sequence DEDWKKELTP…NSASLKFQKE (123 aa). The Zn(2+) site is built by Cys-48, Cys-51, Cys-97, and Cys-100. Cys-120 functions as the Nucleophile in the catalytic mechanism.

Belongs to the MsrB Met sulfoxide reductase family. Zn(2+) serves as cofactor.

The enzyme catalyses L-methionyl-[protein] + [thioredoxin]-disulfide + H2O = L-methionyl-(R)-S-oxide-[protein] + [thioredoxin]-dithiol. The sequence is that of Peptide methionine sulfoxide reductase MsrB from Leptospira interrogans serogroup Icterohaemorrhagiae serovar Lai (strain 56601).